A 138-amino-acid polypeptide reads, in one-letter code: Ribulose bisphosphate carboxylase small subunit (138 aa).

It belongs to the RuBisCO small chain family. In terms of assembly, heterohexadecamer of 8 large and 8 small subunits.

It localises to the plastid. The protein resides in the chloroplast. In terms of biological role, ruBisCO catalyzes two reactions: the carboxylation of D-ribulose 1,5-bisphosphate, the primary event in carbon dioxide fixation, as well as the oxidative fragmentation of the pentose substrate in the photorespiration process. Both reactions occur simultaneously and in competition at the same active site. Although the small subunit is not catalytic it is essential for maximal activity. This is Ribulose bisphosphate carboxylase small subunit from Porphyridium aerugineum (Red microalga).